A 448-amino-acid polypeptide reads, in one-letter code: Methionine aminopeptidase 2-1 (448 aa).

Residues Met1–Phe90 form a disordered region. Residues Ala22–Ala33 show a composition bias toward low complexity. The segment covering Gly34–Asp46 has biased composition (acidic residues). The span at Ala47–Ala58 shows a compositional bias: low complexity. The span at Ala59 to Gly74 shows a compositional bias: basic residues. A compositionally biased stretch (low complexity) spans Ala75–Ser88. His198 contributes to the substrate binding site. 3 residues coordinate a divalent metal cation: Asp218, Asp229, and His301. His309 provides a ligand contact to substrate. The a divalent metal cation site is built by Glu334 and Glu429.

Belongs to the peptidase M24A family. Methionine aminopeptidase eukaryotic type 2 subfamily. Requires Co(2+) as cofactor. The cofactor is Zn(2+). Mn(2+) serves as cofactor. Fe(2+) is required as a cofactor.

It is found in the cytoplasm. The catalysed reaction is Release of N-terminal amino acids, preferentially methionine, from peptides and arylamides.. Cotranslationally removes the N-terminal methionine from nascent proteins. The N-terminal methionine is often cleaved when the second residue in the primary sequence is small and uncharged (Met-Ala-, Cys, Gly, Pro, Ser, Thr, or Val). The chain is Methionine aminopeptidase 2-1 from Emericella nidulans (strain FGSC A4 / ATCC 38163 / CBS 112.46 / NRRL 194 / M139) (Aspergillus nidulans).